Reading from the N-terminus, the 930-residue chain is Serine/threonine-protein kinase ATG1 (930 aa).

The Protein kinase domain occupies 23 to 326 (FIIDREIGKG…FENFFAHHVV (304 aa)). ATP-binding positions include 29-37 (IGKGSFAQV) and Lys-52. Asp-166 serves as the catalytic Proton acceptor. Disordered regions lie at residues 336–468 (DDIP…TEEE), 504–563 (GQNN…SASP), 853–874 (ISSGKEIAKDATQEGSDLDTEE), and 904–930 (NQAKHVSAMRRLSGDVTPRSVPSYGST). Residues 337–350 (DIPKPPKRELETIR) show a composition bias toward basic and acidic residues. The segment covering 377–393 (SPKSPRSSPRSSTVNSS) has biased composition (low complexity). Polar residues-rich tracts occupy residues 400-417 (RQSQNAERRLSISSHNSG) and 504-531 (GQNNSSAKSSPLQRRYTQQGSATSTTGA). Residues 629 to 897 (AAQAIEEFAT…RLNMVRKKQQ (269 aa)) form an ATG13-binding region.

The protein belongs to the protein kinase superfamily. Ser/Thr protein kinase family. APG1/unc-51/ULK1 subfamily. Homodimer. Dimerization requires the presence of ATG13. Forms a ternary complex with ATG13 and ATG17.

The protein localises to the cytoplasm. It localises to the preautophagosomal structure membrane. It catalyses the reaction L-seryl-[protein] + ATP = O-phospho-L-seryl-[protein] + ADP + H(+). The catalysed reaction is L-threonyl-[protein] + ATP = O-phospho-L-threonyl-[protein] + ADP + H(+). In terms of biological role, serine/threonine protein kinase involved in the cytoplasm to vacuole transport (Cvt) and found to be essential in autophagy, where it is required for the formation of autophagosomes. Involved in the clearance of protein aggregates which cannot be efficiently cleared by the proteasome. Required for selective autophagic degradation of the nucleus (nucleophagy) as well as for mitophagy which contributes to regulate mitochondrial quantity and quality by eliminating the mitochondria to a basal level to fulfill cellular energy requirements and preventing excess ROS production. Also involved in endoplasmic reticulum-specific autophagic process, in selective removal of ER-associated degradation (ERAD) substrates. Plays a key role in ATG9 and ATG23 cycling through the pre-autophagosomal structure and is necessary to promote ATG18 binding to ATG9 through phosphorylation of ATG9. Catalyzes phosphorylation of ATG4, decreasing the interaction between ATG4 and ATG8 and impairing deconjugation of PE-conjugated forms of ATG8. Contributes to conidiation by regulating the conidial levels of the conidiation-related protein CP15 and mediates fungal oxidation resistance by controlling total superoxide dismutase (SOD) activity. In Beauveria bassiana (strain ARSEF 2860) (White muscardine disease fungus), this protein is Serine/threonine-protein kinase ATG1.